The sequence spans 320 residues: Ferrochelatase (320 aa).

The Fe cation site is built by His194 and Glu275.

This sequence belongs to the ferrochelatase family. As to quaternary structure, monomer.

It is found in the cytoplasm. It carries out the reaction heme b + 2 H(+) = protoporphyrin IX + Fe(2+). The protein operates within porphyrin-containing compound metabolism; protoheme biosynthesis; protoheme from protoporphyrin-IX: step 1/1. Its function is as follows. Catalyzes the ferrous insertion into protoporphyrin IX. The protein is Ferrochelatase of Shigella sonnei (strain Ss046).